Reading from the N-terminus, the 353-residue chain is Rhodopsin (353 aa).

The Extracellular segment spans residues 1 to 36 (MNGTEGPFFYVPMVNTTGIVRSPYDYPQYYLVSPAA). Residues asparagine 2 and asparagine 15 are each glycosylated (N-linked (GlcNAc...) asparagine). A helical membrane pass occupies residues 37-61 (YAALGAYMFLLILLGFPINFLTLYV). Residues 62–73 (TIEHKKLRTPLN) lie on the Cytoplasmic side of the membrane. Residues 74–96 (YILLNLAVADLFMVFGGFTTTMY) traverse the membrane as a helical segment. Residues 97–110 (TSMHGYFVLGRLGC) lie on the Extracellular side of the membrane. Cysteine 110 and cysteine 187 are oxidised to a cystine. The chain crosses the membrane as a helical span at residues 111 to 133 (NMEGFFATLGGEIGLWSLVVLAV). The 'Ionic lock' involved in activated form stabilization motif lies at 134-136 (ERW). The Cytoplasmic portion of the chain corresponds to 134–152 (ERWLVVCKPISNFRFGENH). Residues 153–173 (AIMGLAFTWVMACSCAVPPLV) traverse the membrane as a helical segment. The Extracellular portion of the chain corresponds to 174–202 (GWSRYIPEGMQCSCGVDYYTRAEGFNNES). Residue asparagine 200 is glycosylated (N-linked (GlcNAc...) asparagine). The chain crosses the membrane as a helical span at residues 203–224 (FVIYMFACHFIIPMCVVFFCYG). At 225–252 (RLLCAVKEAAAAQQESETTQRAEKEVTR) the chain is on the cytoplasmic side. A helical membrane pass occupies residues 253–274 (MVVIMGIAFLICWCPYASVAWY). The Extracellular segment spans residues 275–286 (IFTHQGSEFGPV). Residues 287 to 308 (FMTLPAFFAKTSSVYNPLIYIL) traverse the membrane as a helical segment. N6-(retinylidene)lysine is present on lysine 296. Residues 309–353 (MNKQFRHCMITTLCCGKNPFEEEEGASTASKTEASSVSSSSVSPA) are Cytoplasmic-facing. 2 S-palmitoyl cysteine lipidation sites follow: cysteine 322 and cysteine 323. Residues 331–353 (EEGASTASKTEASSVSSSSVSPA) are disordered. The span at 334–353 (ASTASKTEASSVSSSSVSPA) shows a compositional bias: low complexity.

The protein belongs to the G-protein coupled receptor 1 family. Opsin subfamily. Post-translationally, phosphorylated on some or all of the serine and threonine residues present in the C-terminal region. Contains one covalently linked retinal chromophore.

It is found in the membrane. The protein resides in the cell projection. The protein localises to the cilium. It localises to the photoreceptor outer segment. Functionally, photoreceptor required for image-forming vision at low light intensity. While most salt water fish species use retinal as chromophore, most freshwater fish use 3-dehydroretinal, or a mixture of retinal and 3-dehydroretinal. Light-induced isomerization of 11-cis to all-trans retinal triggers a conformational change that activates signaling via G-proteins. Subsequent receptor phosphorylation mediates displacement of the bound G-protein alpha subunit by arrestin and terminates signaling. The sequence is that of Rhodopsin (rho) from Dicentrarchus labrax (European seabass).